The following is a 381-amino-acid chain: Queuine tRNA-ribosyltransferase (381 aa).

D89 serves as the catalytic Proton acceptor. Substrate-binding positions include 89–93 (DSGGF), D143, Q187, and G214. Residues 245–251 (GVGKPED) form an RNA binding region. The Nucleophile role is filled by D264. The RNA binding; important for wobble base 34 recognition stretch occupies residues 269–273 (TRNAR). Zn(2+)-binding residues include C302, C304, C307, and H333.

It belongs to the queuine tRNA-ribosyltransferase family. Homodimer. Within each dimer, one monomer is responsible for RNA recognition and catalysis, while the other monomer binds to the replacement base PreQ1. Zn(2+) is required as a cofactor.

It catalyses the reaction 7-aminomethyl-7-carbaguanine + guanosine(34) in tRNA = 7-aminomethyl-7-carbaguanosine(34) in tRNA + guanine. Its pathway is tRNA modification; tRNA-queuosine biosynthesis. In terms of biological role, catalyzes the base-exchange of a guanine (G) residue with the queuine precursor 7-aminomethyl-7-deazaguanine (PreQ1) at position 34 (anticodon wobble position) in tRNAs with GU(N) anticodons (tRNA-Asp, -Asn, -His and -Tyr). Catalysis occurs through a double-displacement mechanism. The nucleophile active site attacks the C1' of nucleotide 34 to detach the guanine base from the RNA, forming a covalent enzyme-RNA intermediate. The proton acceptor active site deprotonates the incoming PreQ1, allowing a nucleophilic attack on the C1' of the ribose to form the product. After dissociation, two additional enzymatic reactions on the tRNA convert PreQ1 to queuine (Q), resulting in the hypermodified nucleoside queuosine (7-(((4,5-cis-dihydroxy-2-cyclopenten-1-yl)amino)methyl)-7-deazaguanosine). The sequence is that of Queuine tRNA-ribosyltransferase from Pectobacterium carotovorum subsp. carotovorum (strain PC1).